Here is a 315-residue protein sequence, read N- to C-terminus: Aspartate carbamoyltransferase catalytic subunit (315 aa).

R64 and T65 together coordinate carbamoyl phosphate. Residue K92 participates in L-aspartate binding. Carbamoyl phosphate is bound by residues R114, H142, and Q145. Residues R175 and R229 each contribute to the L-aspartate site. Positions 270 and 271 each coordinate carbamoyl phosphate.

This sequence belongs to the aspartate/ornithine carbamoyltransferase superfamily. ATCase family. In terms of assembly, heterododecamer (2C3:3R2) of six catalytic PyrB chains organized as two trimers (C3), and six regulatory PyrI chains organized as three dimers (R2).

It carries out the reaction carbamoyl phosphate + L-aspartate = N-carbamoyl-L-aspartate + phosphate + H(+). It functions in the pathway pyrimidine metabolism; UMP biosynthesis via de novo pathway; (S)-dihydroorotate from bicarbonate: step 2/3. In terms of biological role, catalyzes the condensation of carbamoyl phosphate and aspartate to form carbamoyl aspartate and inorganic phosphate, the committed step in the de novo pyrimidine nucleotide biosynthesis pathway. This is Aspartate carbamoyltransferase catalytic subunit from Xanthobacter autotrophicus (strain ATCC BAA-1158 / Py2).